The primary structure comprises 1023 residues: Probable beta-glucosidase E (1023 aa).

Residues 1–51 (MPKSYTPVHDSIPEEDHFSSDDESNFRLHRIDRSASRSQSPKENEGEPSIL) form a disordered region. The Cytoplasmic portion of the chain corresponds to 1–128 (MPKSYTPVHD…AVYYSKTWWR (128 aa)). A compositionally biased stretch (basic and acidic residues) spans 11 to 45 (SIPEEDHFSSDDESNFRLHRIDRSASRSQSPKENE). The chain crosses the membrane as a helical; Signal-anchor for type II membrane protein span at residues 129–149 (TLVVVIIALGLLVWGFLKYAS). Residues 150-1023 (TRGDIWEEYD…NLPLGKPFDP (874 aa)) are Extracellular-facing. N-linked (GlcNAc...) asparagine glycans are attached at residues N199 and N387. Residue D415 is part of the active site. N-linked (GlcNAc...) asparagine glycans are attached at residues N458 and N497. 2 disordered regions span residues 485–515 (WESPAPDGDGGPNFSSWTDDEFGFRYPGSPG) and 822–841 (NPSRLPAARPPDAVAPPSYD). Residues 827 to 838 (PAARPPDAVAPP) show a composition bias toward low complexity. N848 is a glycosylation site (N-linked (GlcNAc...) asparagine). The interval 873–909 (ATTPPPPNPEASGSATDQKPHRTKPSDAGGGAGGNPS) is disordered. N964 and N979 each carry an N-linked (GlcNAc...) asparagine glycan.

It belongs to the glycosyl hydrolase 3 family.

Its subcellular location is the cell membrane. It carries out the reaction Hydrolysis of terminal, non-reducing beta-D-glucosyl residues with release of beta-D-glucose.. Its pathway is glycan metabolism; cellulose degradation. Functionally, beta-glucosidases are one of a number of cellulolytic enzymes involved in the degradation of cellulosic biomass. Catalyzes the last step releasing glucose from the inhibitory cellobiose. The protein is Probable beta-glucosidase E (bglE) of Emericella nidulans (strain FGSC A4 / ATCC 38163 / CBS 112.46 / NRRL 194 / M139) (Aspergillus nidulans).